We begin with the raw amino-acid sequence, 145 residues long: Small ribosomal subunit protein uS19 (145 aa).

It belongs to the universal ribosomal protein uS19 family. As to quaternary structure, component of the small ribosomal subunit.

It is found in the cytoplasm. Functionally, component of the small ribosomal subunit. The ribosome is a large ribonucleoprotein complex responsible for the synthesis of proteins in the cell. The chain is Small ribosomal subunit protein uS19 (rps15) from Xenopus laevis (African clawed frog).